The primary structure comprises 71 residues: MKSMDKISTGIAYGTSAGSAGYWFLQWLDQVSPSQWAAIGVLGSLVLGFLTYLTNLYFKIREDRRKAARGE.

The Cytoplasmic portion of the chain corresponds to 1–6 (MKSMDK). The helical transmembrane segment at 7 to 27 (ISTGIAYGTSAGSAGYWFLQW) threads the bilayer. The Periplasmic segment spans residues 28–37 (LDQVSPSQWA). A helical transmembrane segment spans residues 38–58 (AIGVLGSLVLGFLTYLTNLYF). Topologically, residues 59-71 (KIREDRRKAARGE) are cytoplasmic.

In terms of assembly, homoheptamer; forms small heptameric channels of about 2 nm (pinholes). Interacts with isoform Antiholin; this interaction blocks the holin homomultimerization and delays host cell lysis.

It localises to the host cell inner membrane. Its function is as follows. Accumulates harmlessly in the cytoplasmic membrane until it reaches a critical concentration that triggers the formation of nanometer-scale pores (pinholes) causing host cell membrane depolarization and endolysin refolding and release into the periplasmic space. Once the pinholin has permeabilized the host cell membrane, the SAR-endolysin is released into the periplasm and breaks down the peptidoglycan layer. Determines the precise timing of host cell lysis. Participates with the SAR-endolysin and spanin proteins in the sequential events which lead to the programmed host cell lysis releasing the mature viral particles from the host cell. Counteracts the aggregation of the holin molecules and thus of pore formation. In Enterobacteria phage P21 (Bacteriophage 21), this protein is Antiholin (S).